Here is a 385-residue protein sequence, read N- to C-terminus: 3-hydroxyisobutyryl-CoA hydrolase, mitochondrial (385 aa).

Residues glutamate 120, glycine 145, glutamate 168, and aspartate 176 each contribute to the substrate site.

It belongs to the enoyl-CoA hydratase/isomerase family.

It localises to the mitochondrion. It carries out the reaction 3-hydroxy-2-methylpropanoyl-CoA + H2O = 3-hydroxy-2-methylpropanoate + CoA + H(+). Its pathway is amino-acid degradation; L-valine degradation. Its function is as follows. Hydrolyzes 3-hydroxyisobutyryl-CoA (HIBYL-CoA), a saline catabolite. Has high activity toward isobutyryl-CoA. Could be an isobutyryl-CoA dehydrogenase that functions in valine catabolism. Also hydrolyzes 3-hydroxypropanoyl-CoA. This Xenopus laevis (African clawed frog) protein is 3-hydroxyisobutyryl-CoA hydrolase, mitochondrial (hibch).